The sequence spans 499 residues: Low-affinity inorganic phosphate transporter PitA (499 aa).

At 1–4 (MLHL) the chain is on the periplasmic side. A helical membrane pass occupies residues 5-25 (FAGLDLHTGLLLLLALAFVLF). The Cytoplasmic portion of the chain corresponds to 26 to 51 (YEAINGFHDTANAVATVIYTRAMRSQ). The helical transmembrane segment at 52-72 (LAVVMAAVFNFLGVLLGGLSV) threads the bilayer. Residues 73-93 (AYAIVHMLPTDLLLNMGSSHG) are Periplasmic-facing. The chain crosses the membrane as a helical span at residues 94 to 114 (LAMVFSMLLAAIIWNLGTWYF). Over 115-123 (GLPASSSHT) the chain is Cytoplasmic. Residues 124-144 (LIGAIIGIGLTNALMTGTSVV) form a helical membrane-spanning segment. The Periplasmic portion of the chain corresponds to 145-154 (DALNIPKVLS). The chain crosses the membrane as a helical span at residues 155–175 (IFGSLIVSPIVGLVFAGGLIF). Residues 176–206 (LLRRYWSGTKKRARIHLTPAEREKKDGKKKP) lie on the Cytoplasmic side of the membrane. The chain crosses the membrane as a helical span at residues 207-227 (PFWTRIALILSAIGVAFSHGA). Over 228-232 (NDGQK) the chain is Periplasmic. Residues 233–253 (GIGLVMLVLIGVAPAGFVVNM) traverse the membrane as a helical segment. Topologically, residues 254-381 (NATGYEITRT…KSDMLSTIEY (128 aa)) are cytoplasmic. A helical transmembrane segment spans residues 382–402 (APVWIIMAVALALGIGTMIGW). Residues 403–429 (RRVATTIGEKIGKKGMTYAQGMSAQMT) are Periplasmic-facing. A helical membrane pass occupies residues 430–450 (AAVSIGLASYTGMPVSTTHVL). At 451–472 (SSSVAGTMVVDGGGLQRKTVTS) the chain is on the cytoplasmic side. Residues 473-493 (ILMAWVFTLPAAVLLSGGLYW) form a helical membrane-spanning segment. The Periplasmic segment spans residues 494 to 499 (LSLQFL).

This sequence belongs to the inorganic phosphate transporter (PiT) (TC 2.A.20) family. Pit subfamily.

The protein resides in the cell inner membrane. It carries out the reaction phosphate(in) + H(+)(in) = phosphate(out) + H(+)(out). Low-affinity inorganic phosphate transporter. The polypeptide is Low-affinity inorganic phosphate transporter PitA (pitA) (Escherichia coli O157:H7).